The primary structure comprises 293 residues: tRNA pseudouridine synthase B (293 aa).

The Nucleophile role is filled by Asp-39.

It belongs to the pseudouridine synthase TruB family. Type 1 subfamily.

It carries out the reaction uridine(55) in tRNA = pseudouridine(55) in tRNA. Functionally, responsible for synthesis of pseudouridine from uracil-55 in the psi GC loop of transfer RNAs. The protein is tRNA pseudouridine synthase B of Rickettsia bellii (strain OSU 85-389).